Reading from the N-terminus, the 835-residue chain is MKVLALRHSVAQVYADTQTYLHDDSKDEYENAFLISNLTTHNILYLNYSLKTLKILNKSGIAAVEVQSLDELFALIRCNFTYDYENNIVYLHDYSYYTNNEIRTDQHWITKTDITEYLLPGWKLTYVGYNGKNTRGHYNFSFSCQNAATDDDIIVEYIYSNELDFQNFLLRKIKERMTTSLPIARLSNRVFRDKLFPSIMNIHKKVINVGPRNESMFTFLNFPTIKQFSNGAYIVKHTIKLKQEKWLGKRVSQFDIGQYKNMLNIVTTIYYYYNLYHSKPIIYMLGSAPSYWIHDIKQYSDFTFETWDPLDTPYSTIHHKELFFDKDVNKLRDNSVLYIDIRTDRKNIDWKEWRKIVEQQTVSNLNIAYKYLATGKAKVCCVKLTAMDLELPITAKLLHHPTTEVRSEFYAILDVWDIINIKRFIPKGVFYAFINNITTDNVFIQPPFKLKASPTDYIVALYALSNDFNSRQDVINLINKQKQSLITVRINNTFKDEPKVNFKNIYDWTFLPTDFELKDSVITSYDGCLGMFGLSISLSSKPTGNNHLFIINGTDKYYKLDQYANHMSISRRSHQIRFSESATSYSGYIFRDLSNNNFNLIGTNVENSVSGHVYNALIYYRYNYTFDLKRWIYLHSIGKVAVQGGRYYEHAPIELIYACRSAREFAILQDDLTVLRYANEIEEYINKVYSITYADDPNYFIGIKFNSIPYEYDVKVPHLTLGVLFISDNMIHDVVTVLKKMKTELFKTEISTSYTYMLSDNMYVANASGVLSTYFKLYNMFYRNHITFGQSRMFIPHITLSFSNKQTVRIESTRLKINSIYLRKIKGETVFDMSE.

Positions 171-245 (RKIKERMTTS…KHTIKLKQEK (75 aa)) are N7-methyltransferase activity. The segment at 246-428 (WLGKRVSQFD…INIKRFIPKG (183 aa)) is 2'-O-methyltransferase activity. The tract at residues 429 to 555 (VFYAFINNIT…NHLFIINGTD (127 aa)) is N7-methyltransferase activity. A GTase/RTPase activity region spans residues 556–692 (KYYKLDQYAN…EYINKVYSIT (137 aa)). Residues 693 to 835 (YADDPNYFIG…KGETVFDMSE (143 aa)) are 2'-5'-phosphodiesterase activity. Catalysis depends on for 2'-5'-phosphodiesterase activity residues histidine 718, threonine 720, histidine 797, and threonine 799.

The protein belongs to the rotavirus VP3 family. As to quaternary structure, interacts with VP1. Interacts with VP2.

The protein localises to the virion. It catalyses the reaction a 5'-end diphospho-ribonucleoside in mRNA + GTP + H(+) = a 5'-end (5'-triphosphoguanosine)-ribonucleoside in mRNA + diphosphate. It carries out the reaction a 5'-end (5'-triphosphoguanosine)-ribonucleoside in mRNA + S-adenosyl-L-methionine = a 5'-end (N(7)-methyl 5'-triphosphoguanosine)-ribonucleoside in mRNA + S-adenosyl-L-homocysteine. The enzyme catalyses 5'-triphosphoadenylyl-(2'-&gt;5')-adenylyl-(2'-&gt;5')-adenosine + 2 H2O = 2 AMP + ATP + 2 H(+). In terms of biological role, multifunctional enzyme involved in mRNA capping. Catalyzes the formation of the 5' cap structure on the viral plus-strand transcripts. Specifically binds to GTP and displays guanylyltransferase and methyltransferase activities. Has affinity for ssRNA but not for dsRNA. Capping activity is non-specific and caps RNAs that initiate with either a G or an A residue. Together with VP1 polymerase, forms a VP1-VP3 complex positioned near the channels situated at each of the five-fold vertices of the core. Following infection, the outermost layer of the virus is lost, leaving a double-layered particle (DLP) made up of the core and VP6 shell. VP1 then catalyzes the transcription of fully conservative plus-strand genomic RNAs that are capped by VP3 and extruded through the DLP's channels into the cytoplasm where they function as mRNAs for translation of viral proteins. DLPs probably have an RNA triphosphatase activity as well, whereas open cores do not. Functionally, counteracts the host innate immune response thanks to its phosphodiesterase that degrades the 5'-triphosphorylated, 2'-5' linked adenylate oligomers produced by the host cell IFN-inducible 2',5'-oligoadenylate synthetase (OAS). The host RNaseL is therefore not activated. The polypeptide is Protein VP3 (Homo sapiens (Human)).